The following is a 343-amino-acid chain: UDP-3-O-acylglucosamine N-acyltransferase 2 (343 aa).

The Proton acceptor role is filled by His251.

The protein belongs to the transferase hexapeptide repeat family. LpxD subfamily. In terms of assembly, homotrimer.

The enzyme catalyses a UDP-3-O-[(3R)-3-hydroxyacyl]-alpha-D-glucosamine + a (3R)-hydroxyacyl-[ACP] = a UDP-2-N,3-O-bis[(3R)-3-hydroxyacyl]-alpha-D-glucosamine + holo-[ACP] + H(+). Its pathway is bacterial outer membrane biogenesis; LPS lipid A biosynthesis. Its function is as follows. Catalyzes the N-acylation of UDP-3-O-acylglucosamine using 3-hydroxyacyl-ACP as the acyl donor. Is involved in the biosynthesis of lipid A, a phosphorylated glycolipid that anchors the lipopolysaccharide to the outer membrane of the cell. This is UDP-3-O-acylglucosamine N-acyltransferase 2 from Legionella pneumophila subsp. pneumophila (strain Philadelphia 1 / ATCC 33152 / DSM 7513).